Reading from the N-terminus, the 213-residue chain is Viral dihydrofolate reductase (213 aa).

The region spanning leucine 4–lysine 184 is the DHFR domain. NADP(+) contacts are provided by residues alanine 10 and glycine 16–histidine 22. Aspartate 31–glutamine 36 serves as a coordination point for substrate. Lysine 54–threonine 56 contributes to the NADP(+) binding site. Substrate is bound at residue arginine 70. NADP(+) contacts are provided by residues serine 76 to lysine 78 and glycine 116 to aspartate 123.

The protein belongs to the dihydrofolate reductase family.

The catalysed reaction is (6S)-5,6,7,8-tetrahydrofolate + NADP(+) = 7,8-dihydrofolate + NADPH + H(+). It functions in the pathway cofactor biosynthesis; tetrahydrofolate biosynthesis; 5,6,7,8-tetrahydrofolate from 7,8-dihydrofolate: step 1/1. Key enzyme in folate metabolism. Catalyzes an essential reaction for de novo glycine and purine synthesis, and for DNA precursor synthesis. This is Viral dihydrofolate reductase (DHFR) from Saimiri sciureus (Common squirrel monkey).